A 266-amino-acid chain; its full sequence is 2-dehydro-3-deoxy-D-gluconate/2-dehydro-3-deoxy-phosphogluconate aldolase (266 aa).

Substrate contacts are provided by residues 36-37 (ST), 123-125 (YNI), and 151-153 (KDS). Catalysis depends on lysine 151, which acts as the Schiff-base intermediate with substrate.

The protein belongs to the DapA family. KDPG aldolase subfamily. Homotetramer; dimer of dimers.

It carries out the reaction 2-dehydro-3-deoxy-6-phospho-D-gluconate = D-glyceraldehyde 3-phosphate + pyruvate. The enzyme catalyses 2-dehydro-3-deoxy-D-gluconate = D-glyceraldehyde + pyruvate. The catalysed reaction is 2-dehydro-3-deoxy-6-phospho-D-galactonate = D-glyceraldehyde 3-phosphate + pyruvate. It catalyses the reaction 2-dehydro-3-deoxy-D-galactonate = D-glyceraldehyde + pyruvate. It participates in carbohydrate acid metabolism; 2-dehydro-3-deoxy-D-gluconate degradation; D-glyceraldehyde 3-phosphate and pyruvate from 2-dehydro-3-deoxy-D-gluconate: step 2/2. In terms of biological role, involved in the degradation of glucose via the Entner-Doudoroff pathway. Catalyzes the reversible cleavage of 2-keto-3-deoxy-6-phosphogluconate (KDPG) and 2-keto-3-deoxygluconate (KDG) forming pyruvate and glyceraldehyde 3-phosphate or glyceraldehyde, respectively. It is also able to catalyze the reversible cleavage of 2-keto-3-deoxy-6-phosphogalactonate (KDPGal) and 2-keto-3-deoxygalactonate (KDGal). It is equally active with both D- and L-glyceraldehyde. This chain is 2-dehydro-3-deoxy-D-gluconate/2-dehydro-3-deoxy-phosphogluconate aldolase, found in Picrophilus torridus (strain ATCC 700027 / DSM 9790 / JCM 10055 / NBRC 100828 / KAW 2/3).